The sequence spans 451 residues: UDP-glycosyltransferase 13 (451 aa).

His15 acts as the Proton acceptor in catalysis. Residue His15 participates in an anthocyanidin binding. Asp93 (charge relay) is an active-site residue. 7 residues coordinate UDP-alpha-D-glucose: Ala326, Gln328, His343, Trp346, Asn347, Ser348, and Glu351. Ala366 lines the an anthocyanidin pocket. The UDP-alpha-D-glucose site is built by Glu367 and Gln368.

It belongs to the UDP-glycosyltransferase family. Expressed in roots. Detected in stems and leaves.

It carries out the reaction a 7-hydroxyisoflavone + UDP-alpha-D-glucose = a 7-hydroxyisoflavone 7-O-beta-D-glucoside + UDP + H(+). Its function is as follows. Isoflavone 7-O-glucosyltransferase converting daidzein to daidzin, genistein to genistin and formononetin to ononin. Shows some activity toward the flavanones liquiritigenin and naringenin, but not toward cyanidin, isoliquiritigenin, apigenin, luteolin, kaempferol, quercetin, daidzin and puerarin. This is UDP-glycosyltransferase 13 from Pueraria montana var. lobata (Kudzu vine).